The sequence spans 441 residues: Probable D-serine dehydratase (441 aa).

An N6-(pyridoxal phosphate)lysine modification is found at K115.

It belongs to the serine/threonine dehydratase family. DsdA subfamily. Pyridoxal 5'-phosphate serves as cofactor.

It carries out the reaction D-serine = pyruvate + NH4(+). The protein is Probable D-serine dehydratase of Fusobacterium nucleatum subsp. nucleatum (strain ATCC 25586 / DSM 15643 / BCRC 10681 / CIP 101130 / JCM 8532 / KCTC 2640 / LMG 13131 / VPI 4355).